Consider the following 387-residue polypeptide: Eukaryotic translation initiation factor 3 subunit M (387 aa).

The region spanning 181 to 340 (LSSKVMIELL…RKVHISSTMH (160 aa)) is the PCI domain.

This sequence belongs to the eIF-3 subunit M family. Component of the eukaryotic translation initiation factor 3 (eIF-3) complex. The eIF-3 complex interacts with pix.

It is found in the cytoplasm. The protein localises to the golgi apparatus. Component of the eukaryotic translation initiation factor 3 (eIF-3) complex, which is involved in protein synthesis of a specialized repertoire of mRNAs and, together with other initiation factors, stimulates binding of mRNA and methionyl-tRNAi to the 40S ribosome. The eIF-3 complex specifically targets and initiates translation of a subset of mRNAs involved in cell proliferation. In Drosophila ananassae (Fruit fly), this protein is Eukaryotic translation initiation factor 3 subunit M.